Here is a 20-residue protein sequence, read N- to C-terminus: MLTYTGTVINVQTFAAKPDP.

The protein is Chemoheterotroph-specific protein of Thiomonas delicata (Thiomonas cuprina).